The following is a 1184-amino-acid chain: Non-receptor tyrosine-protein kinase TYK2 (1184 aa).

The FERM domain maps to 33 to 430 (LMVLLHWPGP…GYFRLTADSS (398 aa)). The tract at residues 294 to 368 (CYIQNSGQTA…KAGEHLTESP (75 aa)) is disordered. Tyr295 bears the Phosphotyrosine mark. In terms of domain architecture, SH2; atypical spans 449-529 (GIHGPLMDPF…GRSFASLGDL (81 aa)). Ser525 carries the post-translational modification Phosphoserine. One can recognise a Protein kinase 1 domain in the interval 589–866 (ITQLSHLGQG…RTILRDLTRL (278 aa)). At Tyr604 the chain carries Phosphotyrosine. Phosphoserine is present on Ser881. Residues 894-1166 (LKKIRDLGEG…PTFQNLVPIL (273 aa)) form the Protein kinase 2 domain. Residues 900–908 (LGEGHFGKV) and Lys927 each bind ATP. Asp1020 acts as the Proton acceptor in catalysis. Tyr1051 is modified (phosphotyrosine; by autocatalysis). Phosphotyrosine is present on Tyr1052.

Belongs to the protein kinase superfamily. Tyr protein kinase family. JAK subfamily. Interacts (via FERM domain) with JAKMIP1. Interacts with PIK3R1; this interaction is important for cell migration. Interacts with MPL/TPOR. Post-translationally, phosphorylation by JAK1 at Tyr-1051 and Tyr-1052 induces kinase activation.

The catalysed reaction is L-tyrosyl-[protein] + ATP = O-phospho-L-tyrosyl-[protein] + ADP + H(+). The protein kinase 1 domain (also termed pseudokinase domain) mediates autoinhibition of the TYK2 kinase domain. Its function is as follows. Tyrosine kinase of the non-receptor type involved in numerous cytokines and interferons signaling, which regulates cell growth, development, cell migration, innate and adaptive immunity. Plays both structural and catalytic roles in numerous interleukins and interferons (IFN-alpha/beta) signaling. Associates with heterodimeric cytokine receptor complexes and activates STAT family members including STAT1, STAT3, STAT4 or STAT6. The heterodimeric cytokine receptor complexes are composed of (1) a TYK2-associated receptor chain (IFNAR1, IL12RB1, IL10RB or IL13RA1), and (2) a second receptor chain associated either with JAK1 or JAK2. In response to cytokine-binding to receptors, phosphorylates and activates receptors (IFNAR1, IL12RB1, IL10RB or IL13RA1), creating docking sites for STAT members. In turn, recruited STATs are phosphorylated by TYK2 (or JAK1/JAK2 on the second receptor chain), form homo- and heterodimers, translocate to the nucleus, and regulate cytokine/growth factor responsive genes. Negatively regulates STAT3 activity by promototing phosphorylation at a specific tyrosine that differs from the site used for signaling. This is Non-receptor tyrosine-protein kinase TYK2 from Mus musculus (Mouse).